Here is a 246-residue protein sequence, read N- to C-terminus: UDP-N-acetyl-D-mannosaminuronic acid transferase (246 aa).

This sequence belongs to the glycosyltransferase 26 family.

It catalyses the reaction UDP-N-acetyl-alpha-D-mannosaminouronate + N-acetyl-alpha-D-glucosaminyl-di-trans,octa-cis-undecaprenyl diphosphate = beta-D-ManNAcA-(1-&gt;4)-alpha-D-GlcNAc-di-trans,octa-cis-undecaprenyl diphosphate + UDP + H(+). The protein operates within bacterial outer membrane biogenesis; enterobacterial common antigen biosynthesis. Functionally, catalyzes the synthesis of Und-PP-GlcNAc-ManNAcA (Lipid II), the second lipid-linked intermediate involved in enterobacterial common antigen (ECA) synthesis. The protein is UDP-N-acetyl-D-mannosaminuronic acid transferase of Escherichia coli (strain K12).